Here is a 185-residue protein sequence, read N- to C-terminus: uncharacterized protein (185 aa).

Residues 39-177 (LWHASAGVLV…SWPFVPDSRA (139 aa)) form the Nudix hydrolase domain. A Nudix box motif is present at residues 77-99 (GGVVDPGETPQETAIREVGEELG). Residues E93 and E97 each contribute to the Mg(2+) site.

This sequence belongs to the Nudix hydrolase family. Requires Mg(2+) as cofactor.

This is an uncharacterized protein from Rhodococcus erythropolis (Arthrobacter picolinophilus).